A 375-amino-acid chain; its full sequence is Outer membrane porin C (375 aa).

The N-terminal stretch at 1–21 (MKVKVLSLLVPALLVAGAANA) is a signal peptide. The beta stranded transmembrane segment at 22–27 (AEVYNK) threads the bilayer. Residues 28–29 (DG) lie on the Periplasmic side of the membrane. Residues 30–44 (NKLDLYGKVDGLHYF) form a beta stranded membrane-spanning segment. Topologically, residues 45–50 (SDDKSV) are extracellular. Residues 51-66 (DGDQTYMRLGFKGETQ) traverse the membrane as a beta stranded segment. The Periplasmic portion of the chain corresponds to 67 to 70 (VTDQ). A beta stranded transmembrane segment spans residues 71-82 (LTGYGQWEYQIQ). At 83–91 (GNAPESENN) the chain is on the extracellular side. The chain crosses the membrane as a beta stranded span at residues 92–103 (SWTRVAFAGLKF). Topologically, residues 104 to 105 (QD) are periplasmic. Residues 106 to 113 (IGSFDYGR) form a beta stranded membrane-spanning segment. Residues 114–146 (NYGVVYDVTSWTDVLPEFGGDTYGSDNFMQQRG) lie on the Extracellular side of the membrane. Residues 147–156 (NGFATYRNTD) form a beta stranded membrane-spanning segment. Over 157-163 (FFGLVDG) the chain is Periplasmic. A beta stranded transmembrane segment spans residues 164 to 172 (LNFAVQYQG). The Extracellular segment spans residues 173–201 (QNGSVSGENDPDFTGHGITNNGRKALRQN). A beta stranded membrane pass occupies residues 202–212 (GDGVGGSITYD). At 213–215 (YEG) the chain is on the periplasmic side. The beta stranded transmembrane segment at 216–226 (FGVGAAVSSSK) threads the bilayer. At 227 to 241 (RTWDQNNTGLIGTGD) the chain is on the extracellular side. A beta stranded transmembrane segment spans residues 242 to 254 (RAETYTGGLKYDA). The Periplasmic portion of the chain corresponds to 255-256 (NN). The beta stranded transmembrane segment at 257–267 (IYLAAQYTQTY) threads the bilayer. The Extracellular segment spans residues 268–279 (NATRVGSLGWAN). The chain crosses the membrane as a beta stranded span at residues 280–292 (KAQNFEAVAQYQF). Topologically, residues 293–294 (DF) are periplasmic. A beta stranded membrane pass occupies residues 295–309 (GLRPSVAYLQSKGKN). The Extracellular portion of the chain corresponds to 310–320 (LGVVAGRNYDD). The chain crosses the membrane as a beta stranded span at residues 321-335 (EDILKYVDVGATYYF). At 336-338 (NKN) the chain is on the periplasmic side. A beta stranded membrane pass occupies residues 339-348 (MSTYVDYKIN). Over 349 to 364 (LLDDNQFTRAAGINTD) the chain is Extracellular. A beta stranded transmembrane segment spans residues 365–375 (DIVALGLVYQF).

Belongs to the Gram-negative porin family. As to quaternary structure, homotrimer. Forms mixed heterotrimers with OmpF; other mixed heterotrimers are also probable. The N- and C-termini are two parts of the same strand. Extracellular loop 3 folds back into the lumen of the barrel forming a constriction zone that controls the pore size, while the trimer interface is formed by the packing of hydrophobic residues on the outer edges of beta strands 1 to 5 and further stabilized by extracellular loop 2 which reaches into the neighboring monomer.

Its subcellular location is the cell outer membrane. Functionally, forms pores that allow passive diffusion of small molecules across the outer membrane, including some antibiotics. Variation of the residues in the constriction zone modifies the transverse electric field in the zone, altering antibiotic resistance. (Microbial infection) Is not susceptible to CdiA-EC536-mediated toxicity, which uses OmpC-OmpF heterotrimers of some strains as its outer membrane receptor. Mutagenesis of extracellular loops L4 or L5 of this protein confers susceptibility to the toxin. The sequence is that of Outer membrane porin C (ompC) from Escherichia coli O6:H1 (strain CFT073 / ATCC 700928 / UPEC).